Reading from the N-terminus, the 215-residue chain is Octanoyltransferase (215 aa).

Residues 31 to 206 (TDAPDEVWLV…QLVKHLDYAE (176 aa)) form the BPL/LPL catalytic domain. Substrate is bound by residues 70–77 (RGGQVTYH), 137–139 (SLG), and 150–152 (GLA). Cysteine 168 serves as the catalytic Acyl-thioester intermediate.

It belongs to the LipB family.

Its subcellular location is the cytoplasm. It carries out the reaction octanoyl-[ACP] + L-lysyl-[protein] = N(6)-octanoyl-L-lysyl-[protein] + holo-[ACP] + H(+). Its pathway is protein modification; protein lipoylation via endogenous pathway; protein N(6)-(lipoyl)lysine from octanoyl-[acyl-carrier-protein]: step 1/2. Functionally, catalyzes the transfer of endogenously produced octanoic acid from octanoyl-acyl-carrier-protein onto the lipoyl domains of lipoate-dependent enzymes. Lipoyl-ACP can also act as a substrate although octanoyl-ACP is likely to be the physiological substrate. This is Octanoyltransferase from Pseudomonas fluorescens (strain ATCC BAA-477 / NRRL B-23932 / Pf-5).